The primary structure comprises 352 residues: Diacylglycerol acyltransferase/mycolyltransferase Ag85C (352 aa).

Positions 1–37 (MSFIEKVRKLRGAAATMPRRLAIAAVGASLLSGVAVA) are cleaved as a signal peptide. A substrate-binding site is contributed by 86 to 87 (LR). The interval 102–112 (FEEFYQSGLSV) is fibronectin-binding. Substrate-binding residues include serine 170 and asparagine 198. Serine 170 (nucleophile) is an active-site residue. Glutamate 274 is a catalytic residue. Substrate-binding positions include 276–279 (LTLR) and 306–308 (HSW). The active site involves histidine 306. A disordered region spans residues 332–352 (TAAPAQPAQPAQPAQPAQPAT). Low complexity predominate over residues 333-352 (AAPAQPAQPAQPAQPAQPAT).

Belongs to the mycobacterial A85 antigen family. In terms of assembly, homodimer.

It is found in the secreted. The enzyme catalyses an acyl-CoA + a 1,2-diacyl-sn-glycerol = a triacyl-sn-glycerol + CoA. It catalyses the reaction 2 alpha,alpha'-trehalose 6-mycolate = alpha,alpha'-trehalose 6,6'-bismycolate + alpha,alpha-trehalose. Its function is as follows. The antigen 85 proteins (FbpA, FbpB, FbpC) are responsible for the high affinity of mycobacteria to fibronectin, a large adhesive glycoprotein, which facilitates the attachment of M.tuberculosis to murine alveolar macrophages (AMs). They also help to maintain the integrity of the cell wall by catalyzing the transfer of mycolic acids to cell wall arabinogalactan and through the synthesis of alpha,alpha-trehalose dimycolate (TDM, cord factor). They catalyze the transfer of a mycoloyl residue from one molecule of alpha,alpha-trehalose monomycolate (TMM) to another TMM, leading to the formation of TDM. This is Diacylglycerol acyltransferase/mycolyltransferase Ag85C (fbpC) from Mycobacterium avium.